A 77-amino-acid polypeptide reads, in one-letter code: uncharacterized protein (77 aa).

This is an uncharacterized protein from Acidianus hospitalis (AFV-1).